Reading from the N-terminus, the 251-residue chain is Fibroblast growth factor-binding protein 1 (251 aa).

A signal peptide spans 1 to 20 (MRLHSLILLSFLLLATQAFS). The interval 25–62 (KRAKNAPHSTAEEGVEGSAPSLGKAQNKQRSRTSKSLT) is disordered. Disulfide bonds link Cys-74/Cys-91, Cys-100/Cys-133, and Cys-109/Cys-145. The segment at 160–189 (NARGNTKPRKEKAEVSAREHNKVQEAVSTE) is disordered. The span at 170–182 (EKAEVSAREHNKV) shows a compositional bias: basic and acidic residues. Ser-175 carries O-linked (GalNAc...) serine glycosylation. Residues 210 to 251 (RDPECLEDPDVLNQRKTALEFCGESWSSICTFFLNMLQATSC) form a sufficient for interaction with FGF2 and FGF2-induced effects region. Disulfide bonds link Cys-214–Cys-251 and Cys-231–Cys-239.

This sequence belongs to the fibroblast growth factor-binding protein family. In terms of assembly, found in a complex with FGFBP1, FGF1 and FGF2. Interacts with FGF1, FGF7, FGF10, FGF22 and HSPG2. Interacts with FGF2. In terms of tissue distribution, expressed in intestine, ovary, lung, placenta and normal and wounded skin.

The protein localises to the secreted. The protein resides in the extracellular space. Its subcellular location is the cell membrane. Acts as a carrier protein that releases fibroblast-binding factors (FGFs) from the extracellular matrix (EM) storage and thus enhances the mitogenic activity of FGFs. Enhances FGF2 signaling during tissue repair, angiogenesis and in tumor growth. In Mus musculus (Mouse), this protein is Fibroblast growth factor-binding protein 1 (Fgfbp1).